The primary structure comprises 2261 residues: MACWPQLRLLLWKNLTFRRRQTCQLLLEVAWPLFIFLILISVRLSYPPYEQHECHFPNKAMPSAGTLPWVQGIICNANNPCFRYPTPGEAPGVVGNFNKSIVSRLFSDAQRLLLYSQRDTSIKDMHKVLRMLRQIKHPNSNLKLQDFLVDNETFSGFLQHNLSLPRSTVDSLLQANVGLQKVFLQGYQLHLASLCNGSKLEEIIQLGDAEVSALCGLPRKKLDAAERVLRYNMDILKPVVTKLNSTSHLPTQHLAEATTVLLDSLGGLAQELFSTKSWSDMRQEVMFLTNVNSSSSSTQIYQAVSRIVCGHPEGGGLKIKSLNWYEDNNYKALFGGNNTEEDVDTFYDNSTTPYCNDLMKNLESSPLSRIIWKALKPLLVGKILYTPDTPATRQVMAEVNKTFQELAVFHDLEGMWEELSPQIWTFMENSQEMDLVRTLLDSRGNDQFWEQKLDGLDWTAQDIMAFLAKNPEDVQSPNGSVYTWREAFNETNQAIQTISRFMECVNLNKLEPIPTEVRLINKSMELLDERKFWAGIVFTGITPDSVELPHHVKYKIRMDIDNVERTNKIKDGYWDPGPRADPFEDMRYVWGGFAYLQDVVEQAIIRVLTGSEKKTGVYVQQMPYPCYVDDIFLRVMSRSMPLFMTLAWIYSVAVIIKSIVYEKEARLKETMRIMGLDNGILWFSWFVSSLIPLLVSAGLLVVILKLGNLLPYSDPSVVFVFLSVFAMVTILQCFLISTLFSRANLAAACGGIIYFTLYLPYVLCVAWQDYVGFSIKIFASLLSPVAFGFGCEYFALFEEQGIGVQWDNLFESPVEEDGFNLTTAVSMMLFDTFLYGVMTWYIEAVFPGQYGIPRPWYFPCTKSYWFGEEIDEKSHPGSSQKGVSEICMEEEPTHLRLGVSIQNLVKVYRDGMKVAVDGLALNFYEGQITSFLGHNGAGKTTTMSILTGLFPPTSGTAYILGKDIRSEMSSIRQNLGVCPQHNVLFDMLTVEEHIWFYARLKGLSEKHVKAEMEQMALDVGLPPSKLKSKTSQLSGGMQRKLSVALAFVGGSKVVILDEPTAGVDPYSRRGIWELLLKYRQGRTIILSTHHMDEADILGDRIAIISHGKLCCVGSSLFLKNQLGTGYYLTLVKKDVESSLSSCRNSSSTVSCLKKEDSVSQSSSDAGLGSDHESDTLTIDVSAISNLIRKHVSEARLVEDIGHELTYVLPYEAAKEGAFVELFHEIDDRLSDLGISSYGISETTLEEIFLKVAEESGVDAETSDGTLPARRNRRAFGDKQSCLHPFTEDDAVDPNDSDIDPESRETDLLSGMDGKGSYQLKGWKLTQQQFVALLWKRLLIARRSRKGFFAQIVLPAVFVCIALVFSLIVPPFGKYPSLELQPWMYNEQYTFVSNDAPEDMGTQELLNALTKDPGFGTRCMEGNPIPDTPCLAGEEDWTISPVPQSIVDLFQNGNWTMKNPSPACQCSSDKIKKMLPVCPPGAGGLPPPQRKQKTADILQNLTGRNISDYLVKTYVQIIAKSLKNKIWVNEFRYGGFSLGVSNSQALPPSHEVNDAIKQMKKLLKLTKDSSADRFLSSLGRFMAGLDTKNNVKVWFNNKGWHAISSFLNVINNAILRANLQKGENPSQYGITAFNHPLNLTKQQLSEVALMTTSVDVLVSICVIFAMSFVPASFVVFLIQERVSKAKHLQFISGVKPVIYWLSNFVWDMCNYVVPATLVIIIFICFQQKSYVSSTNLPVLALLLLLYGWSITPLMYPASFVFKIPSTAYVVLTSVNLFIGINGSVATFVLELFTNNKLNDINDILKSVFLIFPHFCLGRGLIDMVKNQAMADALERFGENRFVSPLSWDLVGRNLFAMAVEGVVFFLITVLIQYRFFIRPRPVKAKLPPLNDEDEDVRRERQRILDGGGQNDILEIKELTKIYRRKRKPAVDRICIGIPPGECFGLLGVNGAGKSTTFKMLTGDTPVTRGDAFLNKNSILSNIHEVHQNMGYCPQFDAITELLTGREHVEFFALLRGVPEKEVGKVGEWAIRKLGLVKYGEKYASNYSGGNKRKLSTAMALIGGPPVVFLDEPTTGMDPKARRFLWNCALSIVKEGRSVVLTSHSMEECEALCTRMAIMVNGRFRCLGSVQHLKNRFGDGYTIVVRIAGSNPDLKPVQEFFGLAFPGSVLKEKHRNMLQYQLPSSLSSLARIFSILSQSKKRLHIEDYSVSQTTLDQVFVNFAKDQSDDDHLKDLSLHKNQTVVDVAVLTSFLQDEKVKESYV.

The S-palmitoyl cysteine moiety is linked to residue cysteine 3. Residue asparagine 14 is glycosylated (N-linked (GlcNAc...) asparagine). A helical transmembrane segment spans residues 22 to 42; the sequence is TCQLLLEVAWPLFIFLILISV. A lipid anchor (S-palmitoyl cysteine) is attached at cysteine 23. Residues 43–639 are Extracellular-facing; sequence RLSYPPYEQH…DIFLRVMSRS (597 aa). Positions 69–80 are annulus domain 1; sequence WVQGIICNANNP. A disulfide bridge connects residues cysteine 75 and cysteine 309. N-linked (GlcNAc...) asparagine glycans are attached at residues asparagine 98, asparagine 151, asparagine 161, asparagine 196, asparagine 244, asparagine 292, asparagine 337, and asparagine 349. Residues 368–379 form an annulus domain 2 region; sequence SRIIWKALKPLL. Asparagine 400, asparagine 478, asparagine 489, and asparagine 521 each carry an N-linked (GlcNAc...) asparagine glycan. The gateway domain stretch occupies residues 564–594; it reads ERTNKIKDGYWDPGPRADPFEDMRYVWGGFA. The next 5 membrane-spanning stretches (helical) occupy residues 640–660, 683–703, 716–736, 745–765, and 777–797; these read MPLF…KSIV, FSWF…LVVI, SVVF…CFLI, LAAA…VLCV, and IFAS…FALF. An N-linked (GlcNAc...) asparagine glycan is attached at asparagine 820. A helical membrane pass occupies residues 827–847; it reads MMLFDTFLYGVMTWYIEAVFP. The region spanning 899–1131 is the ABC transporter 1 domain; sequence VSIQNLVKVY…LGTGYYLTLV (233 aa). ATP is bound at residue 933 to 940; that stretch reads GHNGAGKT. Residues 941–961 form a helical membrane-spanning segment; the sequence is TTMSILTGLFPPTSGTAYILG. Position 1042 is a phosphoserine; by PKA (serine 1042). Residues cysteine 1110 and cysteine 1111 are each lipidated (S-palmitoyl cysteine). N-linked (GlcNAc...) asparagine glycosylation is found at asparagine 1144 and asparagine 1294. The disordered stretch occupies residues 1285-1310; that stretch reads FTEDDAVDPNDSDIDPESRETDLLSG. Positions 1287 to 1299 are enriched in acidic residues; sequence EDDAVDPNDSDID. Serine 1296 is subject to Phosphoserine. Residues 1351–1371 traverse the membrane as a helical segment; sequence IVLPAVFVCIALVFSLIVPPF. Topologically, residues 1372–1656 are extracellular; it reads GKYPSLELQP…ALMTTSVDVL (285 aa). N-linked (GlcNAc...) asparagine glycosylation is present at asparagine 1453. Cysteine 1463 and cysteine 1477 are oxidised to a cystine. 3 N-linked (GlcNAc...) asparagine glycosylation sites follow: asparagine 1499, asparagine 1504, and asparagine 1637. 6 consecutive transmembrane segments (helical) span residues 1657-1677, 1703-1723, 1735-1755, 1768-1788, 1802-1822, and 1852-1872; these read VSIC…VFLI, FVWD…IFIC, LPVL…LMYP, VVLT…TFVL, ILKS…LIDM, and NLFA…LIQY. The region spanning 1912–2144 is the ABC transporter 2 domain; sequence LEIKELTKIY…FGDGYTIVVR (233 aa). An ATP-binding site is contributed by 1946–1953; that stretch reads GVNGAGKS. An N-linked (GlcNAc...) asparagine glycan is attached at asparagine 2044. Residue serine 2054 is modified to Phosphoserine; by PKA. N-linked (GlcNAc...) asparagine glycosylation occurs at asparagine 2238.

The protein belongs to the ABC transporter superfamily. ABCA family. As to quaternary structure, interacts with MEGF10. May interact with APOE1; functionally associated with APOE1 in the biogenesis of HDLs. Interacts with ABCA8; this interaction potentiates cholesterol efflux. Interacts with ABCA12 and NR1H2; this interaction is required for ABCA1 localization to the cell surface and is necessary for its normal activity and stability. Post-translationally, phosphorylation on Ser-2054 regulates phospholipid efflux. Palmitoylated by ZDHHC8. Palmitoylation is essential for localization to the plasma membrane. As to expression, widely expressed in adult tissues. Highest levels are found in pregnant uterus and uterus.

The protein resides in the cell membrane. The protein localises to the endosome. The enzyme catalyses ATP + H2O + phospholipidSide 1 = ADP + phosphate + phospholipidSide 2.. The catalysed reaction is a 1,2-diacyl-sn-glycero-3-phosphocholine(out) + ATP + H2O = a 1,2-diacyl-sn-glycero-3-phosphocholine(in) + ADP + phosphate + H(+). It carries out the reaction a 1,2-diacyl-sn-glycero-3-phospho-L-serine(out) + ATP + H2O = a 1,2-diacyl-sn-glycero-3-phospho-L-serine(in) + ADP + phosphate + H(+). It catalyses the reaction a sphingomyelin(in) + ATP + H2O = a sphingomyelin(out) + ADP + phosphate + H(+). The enzyme catalyses cholesterol(in) + ATP + H2O = cholesterol(out) + ADP + phosphate + H(+). Its activity is regulated as follows. ATPase activity is decreased by cholesterol and ceramide. ATPase activity is stimulated by phosphatidylcholine and to a lesser degree by phosphatidylserine and sphingomyelin. Phospholipid translocase activity is highly reduced by berylium fluoride and aluminum flouride and reduced by N-ethylmaleimide. Catalyzes the translocation of specific phospholipids from the cytoplasmic to the extracellular/lumenal leaflet of membrane coupled to the hydrolysis of ATP. Thereby, participates in phospholipid transfer to apolipoproteins to form nascent high density lipoproteins/HDLs. Transports preferentially phosphatidylcholine over phosphatidylserine. May play a similar role in the efflux of intracellular cholesterol to apolipoproteins and the formation of nascent high density lipoproteins/HDLs. Translocates phospholipids from the outer face of the plasma membrane and forces it through its gateway and annulus into an elongated hydrophobic tunnel in its extracellular domain. This Mus musculus (Mouse) protein is Phospholipid-transporting ATPase ABCA1.